We begin with the raw amino-acid sequence, 146 residues long: Large ribosomal subunit protein uL15 (146 aa).

The interval methionine 1–proline 56 is disordered. 2 stretches are compositionally biased toward gly residues: residues arginine 21–glutamine 35 and serine 42–glycine 52.

Belongs to the universal ribosomal protein uL15 family. In terms of assembly, part of the 50S ribosomal subunit.

In terms of biological role, binds to the 23S rRNA. The chain is Large ribosomal subunit protein uL15 from Clostridium botulinum (strain Okra / Type B1).